The primary structure comprises 102 residues: MSFLFGGNNRSVEGSVDPAKIEMAVAELDMITDVFNRLVNSCHTKCISSTPLNHRYAEGDLLKGESVCIDRCTAKFFEVNKKVGERMSAMGSAAQATGSFGR.

The Twin CX3C motif motif lies at 42-72 (CHTKCISSTPLNHRYAEGDLLKGESVCIDRC). 2 cysteine pairs are disulfide-bonded: cysteine 42–cysteine 72 and cysteine 46–cysteine 68.

It belongs to the small Tim family. Heterohexamer; composed of 3 copies of TIM9 and 3 copies of TIM10, named soluble 70 kDa complex. Associates directly with the TIM22 complex, whose core is composed of TIM22 and TIM54. Interacts with the transmembrane regions of multi-pass transmembrane proteins in transit.

The protein resides in the mitochondrion inner membrane. Its function is as follows. Mitochondrial intermembrane chaperone that participates in the import and insertion of multi-pass transmembrane proteins into the mitochondrial inner membrane. Also required for the transfer of beta-barrel precursors from the TOM complex to the sorting and assembly machinery (SAM complex) of the outer membrane. Acts as a chaperone-like protein that protects the hydrophobic precursors from aggregation and guide them through the mitochondrial intermembrane space. In Cryptococcus neoformans var. neoformans serotype D (strain B-3501A) (Filobasidiella neoformans), this protein is Mitochondrial import inner membrane translocase subunit TIM10 (TIM10).